The chain runs to 335 residues: UPF0353 protein Mjls_2492 (335 aa).

The next 2 helical transmembrane spans lie at 18-38 and 67-87; these read WFFL…IVAL and LPAI…AGPT. The VWFA domain occupies 98–294; sequence VVMLVIDVSQ…EQLREVYANL (197 aa). A helical membrane pass occupies residues 309-329; it reads VGWLRLGALVLALSALAALLL.

Belongs to the UPF0353 family.

It is found in the cell membrane. This chain is UPF0353 protein Mjls_2492, found in Mycobacterium sp. (strain JLS).